A 134-amino-acid polypeptide reads, in one-letter code: Small ribosomal subunit protein bS6 (134 aa).

Residues 99-134 (EPSAMMQKRDRDERKDRERGRRRDDDGYVGERNEEG) form a disordered region. Residues 105–134 (QKRDRDERKDRERGRRRDDDGYVGERNEEG) are compositionally biased toward basic and acidic residues.

Belongs to the bacterial ribosomal protein bS6 family.

Functionally, binds together with bS18 to 16S ribosomal RNA. In Methylobacterium sp. (strain 4-46), this protein is Small ribosomal subunit protein bS6.